Consider the following 122-residue polypeptide: Fluoride-specific ion channel FluC (122 aa).

Transmembrane regions (helical) follow at residues 4 to 24 (LLIALGGGTGSLARYLLGTAI), 34 to 54 (IGTMVVNVSGCFAIGLAMTLL), 66 to 86 (LALVVGFLGGYTTFSSFEWET), and 95 to 115 (FWIGLANVLGSVTLGYAAVWF). Positions 74 and 77 each coordinate Na(+).

Belongs to the fluoride channel Fluc/FEX (TC 1.A.43) family.

It localises to the cell inner membrane. The enzyme catalyses fluoride(in) = fluoride(out). With respect to regulation, na(+) is not transported, but it plays an essential structural role and its presence is essential for fluoride channel function. Functionally, fluoride-specific ion channel. Important for reducing fluoride concentration in the cell, thus reducing its toxicity. This Solibacter usitatus (strain Ellin6076) protein is Fluoride-specific ion channel FluC.